The chain runs to 435 residues: Adenylosuccinate synthetase (435 aa).

GTP contacts are provided by residues 13 to 19 (GDEGKGK) and 41 to 43 (GHT). Aspartate 14 serves as the catalytic Proton acceptor. Mg(2+) is bound by residues aspartate 14 and glycine 41. IMP contacts are provided by residues 14–17 (DEGK), 39–42 (NAGH), threonine 131, arginine 145, glutamine 226, threonine 241, and arginine 309. Histidine 42 acts as the Proton donor in catalysis. 305 to 311 (TVTGRKR) contacts substrate. GTP contacts are provided by residues arginine 311, 337–339 (KLD), and 419–421 (STG).

This sequence belongs to the adenylosuccinate synthetase family. Homodimer. Requires Mg(2+) as cofactor.

Its subcellular location is the cytoplasm. The catalysed reaction is IMP + L-aspartate + GTP = N(6)-(1,2-dicarboxyethyl)-AMP + GDP + phosphate + 2 H(+). It functions in the pathway purine metabolism; AMP biosynthesis via de novo pathway; AMP from IMP: step 1/2. Its function is as follows. Plays an important role in the de novo pathway of purine nucleotide biosynthesis. Catalyzes the first committed step in the biosynthesis of AMP from IMP. In Dechloromonas aromatica (strain RCB), this protein is Adenylosuccinate synthetase.